We begin with the raw amino-acid sequence, 308 residues long: Atrochrysone carboxyl ACP thioesterase (308 aa).

Residues His99, His101, Asp103, and His104 each contribute to the Zn(2+) site. The Proton donor/acceptor role is filled by Asp103.

The protein belongs to the metallo-beta-lactamase superfamily. The cofactor is Zn(2+).

It catalyses the reaction atrochrysone carboxyl-[ACP] + H2O = atrochrysone carboxylate + holo-[ACP] + H(+). It functions in the pathway secondary metabolite biosynthesis. Its function is as follows. Atrochrysone carboxyl ACP thioesterase; part of the gene cluster that mediates the biosynthesis of physcion, a natural anthraquinone fungicide that can prevent plant fungal infections. The pathway begins with the polyketide synthase AcPKS that condenses 8 malonyl-CoA units to synthesize atrochrysone thioester which is released from the synthase by the atrochrysone carboxyl ACP thioesterase AcTE that breaks the thioester bond and leads to free atrochrysone carboxylic acid. Spontaneous decarboxylation of atrochrysone carboxylic acid leads to the formation of atrochrysone. Then, atrochrysone undergoes spontaneous dehydration and oxidation, giving the products emodin anthrone and emodin. The O-methyltransferase AcOMT then methylates the C-6 hydroxyl of emodin to form physcion. This Aspergillus chevalieri (Eurotium chevalieri) protein is Atrochrysone carboxyl ACP thioesterase.